Here is a 156-residue protein sequence, read N- to C-terminus: Ribosome maturation factor RimP (156 aa).

Belongs to the RimP family.

The protein resides in the cytoplasm. Its function is as follows. Required for maturation of 30S ribosomal subunits. This is Ribosome maturation factor RimP from Exiguobacterium sp. (strain ATCC BAA-1283 / AT1b).